The sequence spans 238 residues: ATP synthase subunit a (238 aa).

A run of 5 helical transmembrane segments spans residues 17 to 37, 75 to 95, 112 to 132, 179 to 199, and 202 to 222; these read LSDM…AVAA, FLTL…LGLP, DATV…YYGV, ILLG…AVGA, and FPIM…AFIF.

This sequence belongs to the ATPase A chain family. As to quaternary structure, F-type ATPases have 2 components, CF(1) - the catalytic core - and CF(0) - the membrane proton channel. CF(1) has five subunits: alpha(3), beta(3), gamma(1), delta(1), epsilon(1). CF(0) has three main subunits: a(1), b(2) and c(9-12). The alpha and beta chains form an alternating ring which encloses part of the gamma chain. CF(1) is attached to CF(0) by a central stalk formed by the gamma and epsilon chains, while a peripheral stalk is formed by the delta and b chains.

It is found in the cell membrane. Its function is as follows. Key component of the proton channel; it plays a direct role in the translocation of protons across the membrane. The protein is ATP synthase subunit a of Bacillus sp. (strain PS3).